We begin with the raw amino-acid sequence, 316 residues long: Mycothiol acetyltransferase (316 aa).

N-acetyltransferase domains follow at residues 16 to 153 and 156 to 316; these read REVR…VPAV and VRIR…PAAN. Residue glutamate 36 coordinates 1D-myo-inositol 2-(L-cysteinylamino)-2-deoxy-alpha-D-glucopyranoside. Acetyl-CoA-binding positions include 83-85 and 91-96; these read LVV and RRGIGS. Residues glutamate 183, lysine 228, and glutamate 238 each coordinate 1D-myo-inositol 2-(L-cysteinylamino)-2-deoxy-alpha-D-glucopyranoside. Acetyl-CoA contacts are provided by residues 242–244 and 249–255; these read VGV and QGRGLGQ. Tyrosine 283 contributes to the 1D-myo-inositol 2-(L-cysteinylamino)-2-deoxy-alpha-D-glucopyranoside binding site. Residue 288–293 coordinates acetyl-CoA; that stretch reads NVAAVR.

The protein belongs to the acetyltransferase family. MshD subfamily. In terms of assembly, monomer.

The catalysed reaction is 1D-myo-inositol 2-(L-cysteinylamino)-2-deoxy-alpha-D-glucopyranoside + acetyl-CoA = mycothiol + CoA + H(+). Catalyzes the transfer of acetyl from acetyl-CoA to desacetylmycothiol (Cys-GlcN-Ins) to form mycothiol. The polypeptide is Mycothiol acetyltransferase (Mycolicibacterium paratuberculosis (strain ATCC BAA-968 / K-10) (Mycobacterium paratuberculosis)).